A 373-amino-acid chain; its full sequence is MSGNTFGKLFTVTSFGESHGLGLGAIIDGCPPGLELTEADLQIDLDRRRPGTSRYTTARREADEVKILSGVFEGKTTGTPIGLMIENTDQRSKDYGNIADSFRPGHADYTYWQKYGLRDYRGGGRSSARETAMRVAAGAIAKKYLAEKFGMTIQACVTQIGDIVASGPKGAPFDVNTVDWSSVEDNPFFFPDETKIEQLGEYLRDIIKEKDSIGAKVTVVATNVPVGLGEPIFDRLDADIAHGLMSINAVKGVEVGDGFAVVNQKGSEHRDELTPEGFSTNHSGGVLGGISSGQQIIAHLALKPTSSIGVSGKTVNLTGEATDIITKGRHDPCVGIRAVPIAEAMLALTLMDHFLRHRGQNADVQCNTPDIEA.

Arg-48 and Arg-54 together coordinate NADP(+). FMN contacts are provided by residues Arg-125 to Ser-127, Asn-248 to Ala-249, Gly-288, Lys-303 to Ser-307, and Arg-329.

Belongs to the chorismate synthase family. As to quaternary structure, homotetramer. The cofactor is FMNH2.

The catalysed reaction is 5-O-(1-carboxyvinyl)-3-phosphoshikimate = chorismate + phosphate. The protein operates within metabolic intermediate biosynthesis; chorismate biosynthesis; chorismate from D-erythrose 4-phosphate and phosphoenolpyruvate: step 7/7. Catalyzes the anti-1,4-elimination of the C-3 phosphate and the C-6 proR hydrogen from 5-enolpyruvylshikimate-3-phosphate (EPSP) to yield chorismate, which is the branch point compound that serves as the starting substrate for the three terminal pathways of aromatic amino acid biosynthesis. This reaction introduces a second double bond into the aromatic ring system. This Colwellia psychrerythraea (strain 34H / ATCC BAA-681) (Vibrio psychroerythus) protein is Chorismate synthase.